Reading from the N-terminus, the 646-residue chain is Serine/threonine-protein kinase max-2 (646 aa).

The interval 19 to 40 (FSPSDKDKDRDDEMKPSSSAMD) is disordered. The span at 22-33 (SDKDKDRDDEMK) shows a compositional bias: basic and acidic residues. Positions 41–54 (ISQPYNTVHRVHVG) constitute a CRIB domain. Positions 136 to 345 (LQCSNGSATS…PPPPEEPPVR (210 aa)) are disordered. Composition is skewed to low complexity over residues 142–157 (SATS…SSSA) and 167–180 (LSTA…LSLS). The segment covering 196 to 205 (SAPQLKTFTG) has biased composition (polar residues). Residues 214-223 (SPFPPQPPVL) show a composition bias toward pro residues. Low complexity predominate over residues 229-245 (TASAVATTTTNPTTSNG). Positions 246–262 (APPPVPGSKGPPVPPKP) are enriched in pro residues. 2 stretches are compositionally biased toward low complexity: residues 273-307 (SSGC…DGDV) and 323-334 (KNGNTTTNKTTV). Residues 376–627 (YEMKKQIGVG…TTELLAHPFL (252 aa)) form the Protein kinase domain. ATP-binding positions include 382-390 (IGVGASGTV) and Lys405. Residue Asp496 is the Proton acceptor of the active site.

Belongs to the protein kinase superfamily. STE Ser/Thr protein kinase family. STE20 subfamily. As to quaternary structure, interacts with mlk-1; the interaction is independent of max-2 and mlk-1 kinase activities. Interacts with mig-2 (GTP-bound form). It depends on Mg(2+) as a cofactor.

Its subcellular location is the perikaryon. The protein localises to the cell projection. It localises to the dendrite. It is found in the cytoplasm. The enzyme catalyses L-seryl-[protein] + ATP = O-phospho-L-seryl-[protein] + ADP + H(+). It catalyses the reaction L-threonyl-[protein] + ATP = O-phospho-L-threonyl-[protein] + ADP + H(+). In terms of biological role, serine/threonine-protein kinase, which phosphorylates mlk-1. Involved in the stress response to heavy metals by activating the mlk-1/mek-1/kgb-1 pathway. In ventral cord commissural motoneurons, required for dorsal axon guidance downstream of unc-6/netrin repulsion receptor unc-5 and probably of Rho GTPases ced-10 and mig-2. Plays a redundant role with mig-10 in orientating axonal growth of HSN neurons. Plays a redundant role with pak-1 in P neuroblast migration and in distal tip cell (DTC)-mediated guidance of gonad elongation probably downstream of Rho GTPases. In association with pak-2, plays a role in embryogenesis. In association with pak-1, may be involved in spermatogenesis. The sequence is that of Serine/threonine-protein kinase max-2 from Caenorhabditis elegans.